The following is a 319-amino-acid chain: Glutathione synthetase (319 aa).

The region spanning 127–311 is the ATP-grasp domain; it reads KIFVTEFADL…VASLLWDAIE (185 aa). Residue 153-209 participates in ATP binding; that stretch reads RNEMGDIILKPLYGNGGAGVFHSARDDRNFSSLLEMFGQMFREPYIAQEYLPDVRKG. Mg(2+) is bound by residues glutamate 282 and asparagine 284.

Belongs to the prokaryotic GSH synthase family. Mg(2+) serves as cofactor. Mn(2+) is required as a cofactor.

It carries out the reaction gamma-L-glutamyl-L-cysteine + glycine + ATP = glutathione + ADP + phosphate + H(+). The protein operates within sulfur metabolism; glutathione biosynthesis; glutathione from L-cysteine and L-glutamate: step 2/2. This Agrobacterium fabrum (strain C58 / ATCC 33970) (Agrobacterium tumefaciens (strain C58)) protein is Glutathione synthetase.